A 459-amino-acid polypeptide reads, in one-letter code: Siroheme synthase 2 (459 aa).

Positions 1–204 (MDYLPIFCQL…EDRERVQQLT (204 aa)) are precorrin-2 dehydrogenase /sirohydrochlorin ferrochelatase. NAD(+) contacts are provided by residues 22 to 23 (EI) and 43 to 44 (LD). Serine 128 bears the Phosphoserine mark. The interval 216–459 (GEVTLVGAGP…KLSWFSDQTA (244 aa)) is uroporphyrinogen-III C-methyltransferase. Proline 225 serves as a coordination point for S-adenosyl-L-methionine. The Proton acceptor role is filled by aspartate 248. The active-site Proton donor is lysine 270. S-adenosyl-L-methionine is bound by residues 301 to 303 (GGD), isoleucine 306, 331 to 332 (TA), methionine 382, and glycine 411.

The protein in the N-terminal section; belongs to the precorrin-2 dehydrogenase / sirohydrochlorin ferrochelatase family. This sequence in the C-terminal section; belongs to the precorrin methyltransferase family.

It catalyses the reaction uroporphyrinogen III + 2 S-adenosyl-L-methionine = precorrin-2 + 2 S-adenosyl-L-homocysteine + H(+). It carries out the reaction precorrin-2 + NAD(+) = sirohydrochlorin + NADH + 2 H(+). The enzyme catalyses siroheme + 2 H(+) = sirohydrochlorin + Fe(2+). It functions in the pathway cofactor biosynthesis; adenosylcobalamin biosynthesis; precorrin-2 from uroporphyrinogen III: step 1/1. The protein operates within cofactor biosynthesis; adenosylcobalamin biosynthesis; sirohydrochlorin from precorrin-2: step 1/1. Its pathway is porphyrin-containing compound metabolism; siroheme biosynthesis; precorrin-2 from uroporphyrinogen III: step 1/1. It participates in porphyrin-containing compound metabolism; siroheme biosynthesis; siroheme from sirohydrochlorin: step 1/1. It functions in the pathway porphyrin-containing compound metabolism; siroheme biosynthesis; sirohydrochlorin from precorrin-2: step 1/1. Multifunctional enzyme that catalyzes the SAM-dependent methylations of uroporphyrinogen III at position C-2 and C-7 to form precorrin-2 via precorrin-1. Then it catalyzes the NAD-dependent ring dehydrogenation of precorrin-2 to yield sirohydrochlorin. Finally, it catalyzes the ferrochelation of sirohydrochlorin to yield siroheme. This is Siroheme synthase 2 from Pectobacterium atrosepticum (strain SCRI 1043 / ATCC BAA-672) (Erwinia carotovora subsp. atroseptica).